A 376-amino-acid chain; its full sequence is Glucose-1-phosphate adenylyltransferase (376 aa).

Residues Y101, G166, 181–182 (EK), and S192 each bind alpha-D-glucose 1-phosphate.

It belongs to the bacterial/plant glucose-1-phosphate adenylyltransferase family. As to quaternary structure, homotetramer.

The catalysed reaction is alpha-D-glucose 1-phosphate + ATP + H(+) = ADP-alpha-D-glucose + diphosphate. It participates in glycan biosynthesis; glycogen biosynthesis. Its function is as follows. Involved in the biosynthesis of ADP-glucose, a building block required for the elongation reactions to produce glycogen. Catalyzes the reaction between ATP and alpha-D-glucose 1-phosphate (G1P) to produce pyrophosphate and ADP-Glc. This is Glucose-1-phosphate adenylyltransferase from Bacillus cereus (strain Q1).